Here is a 316-residue protein sequence, read N- to C-terminus: Mannose-6-phosphate isomerase (316 aa).

The Zn(2+) site is built by Gln-95, His-97, Glu-114, and His-171. The active site involves Arg-191.

Belongs to the mannose-6-phosphate isomerase type 1 family. Zn(2+) is required as a cofactor.

The enzyme catalyses D-mannose 6-phosphate = D-fructose 6-phosphate. This Streptococcus mutans serotype c (strain ATCC 700610 / UA159) protein is Mannose-6-phosphate isomerase (pmi).